The chain runs to 631 residues: 1-deoxy-D-xylulose-5-phosphate synthase (631 aa).

Residues histidine 87 and 128-130 (GHS) contribute to the thiamine diphosphate site. Residue aspartate 159 coordinates Mg(2+). Thiamine diphosphate contacts are provided by residues 160–161 (GA), asparagine 188, phenylalanine 295, and glutamate 377. Asparagine 188 serves as a coordination point for Mg(2+).

Belongs to the transketolase family. DXPS subfamily. Homodimer. Mg(2+) serves as cofactor. Requires thiamine diphosphate as cofactor.

The enzyme catalyses D-glyceraldehyde 3-phosphate + pyruvate + H(+) = 1-deoxy-D-xylulose 5-phosphate + CO2. It participates in metabolic intermediate biosynthesis; 1-deoxy-D-xylulose 5-phosphate biosynthesis; 1-deoxy-D-xylulose 5-phosphate from D-glyceraldehyde 3-phosphate and pyruvate: step 1/1. Its function is as follows. Catalyzes the acyloin condensation reaction between C atoms 2 and 3 of pyruvate and glyceraldehyde 3-phosphate to yield 1-deoxy-D-xylulose-5-phosphate (DXP). This is 1-deoxy-D-xylulose-5-phosphate synthase from Pseudomonas entomophila (strain L48).